Consider the following 209-residue polypeptide: Kynurenine formamidase (209 aa).

W18 contributes to the substrate binding site. Residues H48, H52, and D54 each coordinate Zn(2+). The active-site Proton donor/acceptor is H58. H160 and E172 together coordinate Zn(2+).

Belongs to the Cyclase 1 superfamily. KynB family. As to quaternary structure, homodimer. Zn(2+) serves as cofactor.

It catalyses the reaction N-formyl-L-kynurenine + H2O = L-kynurenine + formate + H(+). It participates in amino-acid degradation; L-tryptophan degradation via kynurenine pathway; L-kynurenine from L-tryptophan: step 2/2. Functionally, catalyzes the hydrolysis of N-formyl-L-kynurenine to L-kynurenine, the second step in the kynurenine pathway of tryptophan degradation. The sequence is that of Kynurenine formamidase from Sphingopyxis alaskensis (strain DSM 13593 / LMG 18877 / RB2256) (Sphingomonas alaskensis).